Here is a 312-residue protein sequence, read N- to C-terminus: MAARIYIGRLTSRVSEKDIEHFFRGYGQIRDVLLKNGFGFVEFDDKRDAEDAVHDLNGKELGGERVILDYSKPRGGGGDRGGFGGGGRGGARVSSYSGGGGGGRDRFDRYDRGPPRRESRYGRPYSTRHRVVVENLSSRISWQDLKDQVRRQGVEPTYAEAHKRPNEALLCFATPSDLKRCIEKCDGMDLNGRKIKMIDDSQAGRSRSRSNSRSRSRSRSRDRRRSRSRSSSRSKSRSRSPPKRSRRESKSKSRSRSRSRSADNRKSRSPSRSPKKVDRSPSPPRGSRSPSEKGSPRRSRSASPMDNGDGDN.

Residues 3–73 enclose the RRM 1 domain; sequence ARIYIGRLTS…ERVILDYSKP (71 aa). 2 disordered regions span residues 69 to 125 and 196 to 312; these read DYSK…GRPY and KMID…DGDN. A compositionally biased stretch (gly residues) spans 74 to 90; the sequence is RGGGGDRGGFGGGGRGG. The segment covering 103 to 121 has biased composition (basic and acidic residues); sequence GRDRFDRYDRGPPRRESRY. One can recognise an RRM 2 domain in the interval 129 to 202; it reads HRVVVENLSS…RKIKMIDDSQ (74 aa). A compositionally biased stretch (basic residues) spans 206–259; it reads SRSRSNSRSRSRSRSRDRRRSRSRSSSRSKSRSRSPPKRSRRESKSKSRSRSRS.

Belongs to the splicing factor SR family. In terms of processing, extensively phosphorylated on serine residues in the RS domain.

Its subcellular location is the nucleus. Its function is as follows. Plays a functionally redundant role in spermatogenesis and growth rate control. In Caenorhabditis elegans, this protein is Probable splicing factor, arginine/serine-rich 1 (rsp-1).